Consider the following 318-residue polypeptide: Transaldolase (318 aa).

Catalysis depends on Lys132, which acts as the Schiff-base intermediate with substrate.

It belongs to the transaldolase family. Type 1 subfamily. In terms of assembly, homodimer.

The protein resides in the cytoplasm. The enzyme catalyses D-sedoheptulose 7-phosphate + D-glyceraldehyde 3-phosphate = D-erythrose 4-phosphate + beta-D-fructose 6-phosphate. Its pathway is carbohydrate degradation; pentose phosphate pathway; D-glyceraldehyde 3-phosphate and beta-D-fructose 6-phosphate from D-ribose 5-phosphate and D-xylulose 5-phosphate (non-oxidative stage): step 2/3. In terms of biological role, transaldolase is important for the balance of metabolites in the pentose-phosphate pathway. The protein is Transaldolase of Shewanella loihica (strain ATCC BAA-1088 / PV-4).